The chain runs to 346 residues: MDISDFDFTLPEHLIAQHPPEVRGSSRLLVALSDMPLQDRVFGDLPDYVEAGDVLVFNNTKVMKARLFGQKDSGGRIEALIERVLDNHTALAHIRSSKSPKPGMGLVFEGGIRAVMVGREGELFCLRFEGGQTVYELLEQNGHLPLPPYIERAADADDDSRYQTVYAKYQGAVAAPTAGLHFTEELLRRLKDKGAVTAEVTLHVGAGTFQPVRVDKIEEHKMHSEWFEVPSETVAAVEAAKARGNKAWAVGTTSMRALESAARATGYLKDGQGDTDIFITPGYRFNVVDRLVTNFHLPKSTLLMLVGAFSGMGHIRAVYRHAIEREYRFFSYGDAMVLGRNEGGGL.

Belongs to the QueA family. Monomer.

The protein localises to the cytoplasm. It carries out the reaction 7-aminomethyl-7-carbaguanosine(34) in tRNA + S-adenosyl-L-methionine = epoxyqueuosine(34) in tRNA + adenine + L-methionine + 2 H(+). It functions in the pathway tRNA modification; tRNA-queuosine biosynthesis. Its function is as follows. Transfers and isomerizes the ribose moiety from AdoMet to the 7-aminomethyl group of 7-deazaguanine (preQ1-tRNA) to give epoxyqueuosine (oQ-tRNA). This chain is S-adenosylmethionine:tRNA ribosyltransferase-isomerase, found in Neisseria gonorrhoeae (strain ATCC 700825 / FA 1090).